The following is a 302-amino-acid chain: Cyclin-C (302 aa).

Positions 46-152 (NFITAVATEG…VYDSEFILVE (107 aa)) constitute a Cyclin N-terminal domain. The tract at residues 281-302 (LPKPNQQPPPQQQHQHQQGYHL) is disordered. The segment covering 292 to 302 (QQHQHQQGYHL) has biased composition (low complexity).

The protein belongs to the cyclin family. Cyclin C subfamily. In terms of assembly, component of the Mediator complex.

Its subcellular location is the nucleus. Its function is as follows. Component of the Mediator complex, a coactivator involved in regulated gene transcription of nearly all RNA polymerase II-dependent genes. Mediator functions as a bridge to convey information from gene-specific regulatory proteins to the basal RNA polymerase II transcription machinery. Mediator is recruited to promoters by direct interactions with regulatory proteins and serves as a scaffold for the assembly of a functional preinitiation complex with RNA polymerase II and the general transcription factors. Binds to and activates cyclin-dependent kinase cdk-8 that phosphorylates the CTD (C-terminal domain) of the large subunit of RNA polymerase II (RNAp II), which may inhibit the formation of a transcription initiation complex. In Caenorhabditis elegans, this protein is Cyclin-C (cic-1).